Consider the following 508-residue polypeptide: UDP-N-acetylmuramoyl-L-alanyl-D-glutamate--2,6-diaminopimelate ligase (508 aa).

A UDP-N-acetyl-alpha-D-muramoyl-L-alanyl-D-glutamate-binding site is contributed by Ser29. ATP is bound at residue 112–118 (GTNGKTS). Residues 159–160 (TT), Ser186, Gln192, and Arg194 contribute to the UDP-N-acetyl-alpha-D-muramoyl-L-alanyl-D-glutamate site. N6-carboxylysine is present on Lys226. Residues Arg398, 421–424 (DNPR), Gly473, and Glu477 each bind meso-2,6-diaminopimelate. Residues 421 to 424 (DNPR) carry the Meso-diaminopimelate recognition motif motif.

It belongs to the MurCDEF family. MurE subfamily. The cofactor is Mg(2+). Post-translationally, carboxylation is probably crucial for Mg(2+) binding and, consequently, for the gamma-phosphate positioning of ATP.

It is found in the cytoplasm. The enzyme catalyses UDP-N-acetyl-alpha-D-muramoyl-L-alanyl-D-glutamate + meso-2,6-diaminopimelate + ATP = UDP-N-acetyl-alpha-D-muramoyl-L-alanyl-gamma-D-glutamyl-meso-2,6-diaminopimelate + ADP + phosphate + H(+). It functions in the pathway cell wall biogenesis; peptidoglycan biosynthesis. Catalyzes the addition of meso-diaminopimelic acid to the nucleotide precursor UDP-N-acetylmuramoyl-L-alanyl-D-glutamate (UMAG) in the biosynthesis of bacterial cell-wall peptidoglycan. The protein is UDP-N-acetylmuramoyl-L-alanyl-D-glutamate--2,6-diaminopimelate ligase of Janthinobacterium sp. (strain Marseille) (Minibacterium massiliensis).